Consider the following 264-residue polypeptide: Undecaprenyl-diphosphatase 2 (264 aa).

Helical transmembrane passes span 29–49, 77–97, 107–127, 137–157, 180–200, 212–232, and 243–263; these read GSAF…SYFW, SWIV…SGVL, LTVI…AEIF, ASLA…IPGV, FSFL…LWEL, VLAT…WGLM, and FVIY…MGWL.

Belongs to the UppP family.

It localises to the cell inner membrane. It catalyses the reaction di-trans,octa-cis-undecaprenyl diphosphate + H2O = di-trans,octa-cis-undecaprenyl phosphate + phosphate + H(+). Catalyzes the dephosphorylation of undecaprenyl diphosphate (UPP). Confers resistance to bacitracin. This is Undecaprenyl-diphosphatase 2 from Mesorhizobium japonicum (strain LMG 29417 / CECT 9101 / MAFF 303099) (Mesorhizobium loti (strain MAFF 303099)).